The sequence spans 630 residues: Long-chain-fatty-acid--AMP ligase FadD32 (630 aa).

ATP contacts are provided by residues Thr-187–Arg-192, Ser-342, Ala-346, Asp-469, and Arg-483.

The protein belongs to the ATP-dependent AMP-binding enzyme family. As to quaternary structure, monomer.

It carries out the reaction a long-chain fatty acid + holo-[ACP] + ATP = a long-chain fatty acyl-[ACP] + AMP + diphosphate. It catalyses the reaction decanoate + ATP + H(+) = decanoyl-AMP + diphosphate. The enzyme catalyses dodecanoate + ATP + H(+) = dodecanoyl-AMP + diphosphate. The catalysed reaction is tetradecanoate + ATP + H(+) = tetradecanoyl-AMP + diphosphate. The protein operates within lipid metabolism; mycolic acid biosynthesis. The acyl-AMP ligase activity is inhibited by the alkylphosphate ester of AMP, adenosine 50-dodecylphosphate (AMPC12). Also inhibited by eicosyl-AMP (AMPC20). Functionally, involved in the biosynthesis of mycolic acids. Catalyzes the activation of long-chain fatty acids as acyl-adenylates (acyl-AMP), which are then transferred to the phosphopantetheine arm of the polyketide synthase Pks13 for further chain extension. Can use decanoate (C10), dodecanoate (C12) and tetradecanoate (C14). This Mycolicibacterium smegmatis (strain ATCC 700084 / mc(2)155) (Mycobacterium smegmatis) protein is Long-chain-fatty-acid--AMP ligase FadD32.